Reading from the N-terminus, the 163-residue chain is Ribosome maturation factor RimP (163 aa).

This sequence belongs to the RimP family.

Its subcellular location is the cytoplasm. In terms of biological role, required for maturation of 30S ribosomal subunits. The chain is Ribosome maturation factor RimP from Bordetella petrii (strain ATCC BAA-461 / DSM 12804 / CCUG 43448).